The sequence spans 426 residues: Glutamate-1-semialdehyde 2,1-aminomutase (426 aa).

K265 bears the N6-(pyridoxal phosphate)lysine mark.

Belongs to the class-III pyridoxal-phosphate-dependent aminotransferase family. HemL subfamily. Homodimer. The cofactor is pyridoxal 5'-phosphate.

The protein resides in the cytoplasm. It carries out the reaction (S)-4-amino-5-oxopentanoate = 5-aminolevulinate. The protein operates within porphyrin-containing compound metabolism; protoporphyrin-IX biosynthesis; 5-aminolevulinate from L-glutamyl-tRNA(Glu): step 2/2. The polypeptide is Glutamate-1-semialdehyde 2,1-aminomutase (Klebsiella pneumoniae (strain 342)).